Here is a 657-residue protein sequence, read N- to C-terminus: Penicillin-binding protein activator LpoA (657 aa).

A signal peptide spans 1 to 25 (MLSSTFVRSKAGLVPVILAALILAA). The N-palmitoyl cysteine moiety is linked to residue C26. C26 is lipidated: S-diacylglycerol cysteine.

This sequence belongs to the LpoA family. In terms of assembly, interacts with PBP1a.

Its subcellular location is the cell outer membrane. Functionally, regulator of peptidoglycan synthesis that is essential for the function of penicillin-binding protein 1A (PBP1a). The protein is Penicillin-binding protein activator LpoA of Yersinia pseudotuberculosis serotype O:1b (strain IP 31758).